We begin with the raw amino-acid sequence, 389 residues long: MDARELIDKYHMNTYSRFPVTLVPGEGARVWDDEGNEYIDLVAGIAVNVLGHCHPAVVEAVKEQVERLIHCSNLYYNEPQAEAARLLAEAAPKDLNKVFFCNSGTESVECAIKLARKFTGCTKFIAFEGGFHGRTMGALSATWKPEFREPFEPLVPEFEHVPYGDVNAVEKAIDDDTAAVIVEPVQGEAGVRIPPEGFLRELRELCDEHGLLLIVDEVQSGMGRTGQFFAFEHEDVLPDIVCLAKGLGGGVPVGATIAREEVAEAFEPGDHGSTFGGNPLACAAVCAAVSTVLEENLPEAAERKGKLAMRILSEAEDVVEEVRGRGLMMGVEVGDDERAKDVAREMLDRGALVNVTSGDVIRLVPPLVIGEDELEKALAELADALRASG.

Pyridoxal 5'-phosphate contacts are provided by residues 104-105 and F131; that span reads GT. A N(2)-acetyl-L-ornithine-binding site is contributed by R134. 216-219 is a binding site for pyridoxal 5'-phosphate; it reads DEVQ. K245 is modified (N6-(pyridoxal phosphate)lysine). S273 provides a ligand contact to N(2)-acetyl-L-ornithine. T274 serves as a coordination point for pyridoxal 5'-phosphate.

This sequence belongs to the class-III pyridoxal-phosphate-dependent aminotransferase family. ArgD subfamily. As to quaternary structure, homodimer. It depends on pyridoxal 5'-phosphate as a cofactor.

Its subcellular location is the cytoplasm. The enzyme catalyses N(2)-acetyl-L-ornithine + 2-oxoglutarate = N-acetyl-L-glutamate 5-semialdehyde + L-glutamate. The protein operates within amino-acid biosynthesis; L-arginine biosynthesis; N(2)-acetyl-L-ornithine from L-glutamate: step 4/4. This is Acetylornithine aminotransferase from Methanopyrus kandleri (strain AV19 / DSM 6324 / JCM 9639 / NBRC 100938).